A 430-amino-acid polypeptide reads, in one-letter code: Immunoglobulin heavy constant delta (430 aa).

Residues A1–T406 lie on the Extracellular side of the membrane. The Ig-like 1 domain occupies P6 to F98. C28 and C84 are joined by a disulfide. The segment at E96–P167 is disordered. The span at A106–A118 shows a compositional bias: polar residues. 2 O-linked (GalNAc...) serine glycosylation sites follow: S109 and S110. Residues T113, T126, T127, T131, and T132 are each glycosylated (O-linked (GalNAc...) threonine). Residues G138 to T158 show a composition bias toward basic and acidic residues. Ig-like domains follow at residues P175–A263 and P267–E373. Cystine bridges form between C190/C249 and C294/C355. 3 N-linked (GlcNAc...) asparagine glycosylation sites follow: N225, N316, and N367. The helical transmembrane segment at L407–I427 threads the bilayer. Topologically, residues K428–K430 are cytoplasmic.

In terms of assembly, immunoglobulins are composed of two identical heavy chains and two identical light chains; disulfide-linked. An IgD molecule contains thus a delta heavy chain combined with either a kappa or a lambda light chains. Kappa light chains are found predominantly on the membrane IgD (mIgD) form and lambda on the secreted IgD (sIgD) form, this fact is poorly understood. Membrane-bound IgD molecules are non-covalently associated with a heterodimer of CD79A and CD79B.

It localises to the secreted. Its subcellular location is the cell membrane. Its function is as follows. Constant region of immunoglobulin heavy chains. Immunoglobulins, also known as antibodies, are membrane-bound or secreted glycoproteins produced by B lymphocytes. In the recognition phase of humoral immunity, the membrane-bound immunoglobulins serve as receptors which, upon binding of a specific antigen, trigger the clonal expansion and differentiation of B lymphocytes into immunoglobulins-secreting plasma cells. Secreted immunoglobulins mediate the effector phase of humoral immunity, which results in the elimination of bound antigens. The antigen binding site is formed by the variable domain of one heavy chain, together with that of its associated light chain. Thus, each immunoglobulin has two antigen binding sites with remarkable affinity for a particular antigen. The variable domains are assembled by a process called V-(D)-J rearrangement and can then be subjected to somatic hypermutations which, after exposure to antigen and selection, allow affinity maturation for a particular antigen. IgD is the major antigen receptor isotype on the surface of most peripheral B-cells, where it is coexpressed with IgM. The membrane-bound IgD (mIgD) induces the phosphorylation of CD79A and CD79B by the Src family of protein tyrosine kinases. Soluble IgD (sIgD) concentration in serum below those of IgG, IgA, and IgM but much higher than that of IgE. IgM and IgD molecules present on B cells have identical V regions and antigen-binding sites. After the antigen binds to the B-cell receptor, the secreted form sIgD is shut off. IgD is a potent inducer of TNF, IL1B, and IL1RN. IgD also induces release of IL6, IL10, and LIF from peripheral blood mononuclear cells. Monocytes seem to be the main producers of cytokines in vitro in the presence of IgD. This chain is Immunoglobulin heavy constant delta, found in Homo sapiens (Human).